Here is a 198-residue protein sequence, read N- to C-terminus: Proteasome subunit beta 1 (198 aa).

Residues 1 to 6 (MSGPGA) constitute a propeptide, removed in mature form; by autocatalysis. The active-site Nucleophile is the threonine 7.

It belongs to the peptidase T1B family. As to quaternary structure, the 20S proteasome core is composed of 14 alpha and 14 beta subunits that assemble into four stacked heptameric rings, resulting in a barrel-shaped structure. The two inner rings, each composed of seven catalytic beta subunits, are sandwiched by two outer rings, each composed of seven alpha subunits. The catalytic chamber with the active sites is on the inside of the barrel. Has a gated structure, the ends of the cylinder being occluded by the N-termini of the alpha-subunits. Is capped at one or both ends by the proteasome regulatory ATPase, PAN.

It localises to the cytoplasm. The catalysed reaction is Cleavage of peptide bonds with very broad specificity.. With respect to regulation, the formation of the proteasomal ATPase PAN-20S proteasome complex, via the docking of the C-termini of PAN into the intersubunit pockets in the alpha-rings, triggers opening of the gate for substrate entry. Interconversion between the open-gate and close-gate conformations leads to a dynamic regulation of the 20S proteasome proteolysis activity. Component of the proteasome core, a large protease complex with broad specificity involved in protein degradation. In Ignicoccus hospitalis (strain KIN4/I / DSM 18386 / JCM 14125), this protein is Proteasome subunit beta 1.